A 503-amino-acid chain; its full sequence is GTPase Obg (503 aa).

Residues 2–159 (PQFVDRVVLH…KDVILELKSM (158 aa)) form the Obg domain. The region spanning 160 to 340 (ADVGLVGFPS…LKYALMDIVK (181 aa)) is the OBG-type G domain. GTP is bound by residues 166-173 (GFPSAGKS), 191-195 (FTTLV), 212-215 (DVPG), 292-295 (NKMD), and 321-323 (STV). Positions 173 and 193 each coordinate Mg(2+). The OCT domain maps to 371–444 (EFEVEADPSA…IGEITFEWDP (74 aa)). The segment covering 457-476 (RGTDVRLEQNTRATPEERKR) has biased composition (basic and acidic residues). Positions 457-503 (RGTDVRLEQNTRATPEERKRASQARRGLIDENDFGDGEVAERERWQG) are disordered.

Belongs to the TRAFAC class OBG-HflX-like GTPase superfamily. OBG GTPase family. As to quaternary structure, monomer. Requires Mg(2+) as cofactor.

It is found in the cytoplasm. Its function is as follows. An essential GTPase which binds GTP, GDP and possibly (p)ppGpp with moderate affinity, with high nucleotide exchange rates and a fairly low GTP hydrolysis rate. Plays a role in control of the cell cycle, stress response, ribosome biogenesis and in those bacteria that undergo differentiation, in morphogenesis control. The sequence is that of GTPase Obg from Corynebacterium jeikeium (strain K411).